Reading from the N-terminus, the 106-residue chain is Circadian clock oscillator protein KaiB (106 aa).

The protein belongs to the KaiB family. The KaiABC complex composition changes during the circadian cycle to control KaiC phosphorylation. Complexes KaiC(6), KaiA(2-4):KaiC(6), KaiB(6):KaiC(6) and KaiC(6):KaiB(6):KaiA(12) are among the most important forms, many form cooperatively. Undergoes a major conformational rearrangment; in the free state forms homotetramers as a dimer of dimers. When bound to the CI domain of KaiC switches to a monomeric thioredoxin-fold (KaiB(fs)). KaiB(fs) binds CikA, leading it to dephosphorylate phospho-RpaA.

In terms of biological role, key component of the KaiABC oscillator complex, which constitutes the main circadian regulator in cyanobacteria. Complex composition changes during the circadian cycle to control KaiC phosphorylation. KaiA stimulates KaiC autophosphorylation, while KaiB sequesters KaiA, leading to KaiC autodephosphorylation. Phospho-Ser-431 KaiC accumulation triggers binding of KaiB to form the KaiB(6):KaiC(6) complex, leading to changes in output regulators CikA and SasA. KaiB switches to a thioredoxin-like fold (KaiB(fs)) when bound to KaiC. KaiB(6):KaiC(6) formation exposes a site for KaiA binding that sequesters KaiA from KaiC, making the KaiC(6):KaiB(6):KaiA(12) complex that results in KaiC autodephosphorylation. Functionally, a metamorphic protein which reversibly switches between an inactive tetrameric fold and a rare, thioredoxin-like monomeric fold (KaiB(fs)). KaiB(fs) binds phospho-KaiC, KaiA and CikA. KaiA and CikA compete for binding to KaiB(fs), and KaiB(fs) and SasA compete for binding to KaiC, thus the clock oscillator and output signal pathway are tightly coupled. In Gloeothece citriformis (strain PCC 7424) (Cyanothece sp. (strain PCC 7424)), this protein is Circadian clock oscillator protein KaiB.